The sequence spans 331 residues: Protein RecA (331 aa).

An ATP-binding site is contributed by 66–73; sequence GPESSGKT.

This sequence belongs to the RecA family.

Its subcellular location is the cytoplasm. Can catalyze the hydrolysis of ATP in the presence of single-stranded DNA, the ATP-dependent uptake of single-stranded DNA by duplex DNA, and the ATP-dependent hybridization of homologous single-stranded DNAs. It interacts with LexA causing its activation and leading to its autocatalytic cleavage. The polypeptide is Protein RecA (Acholeplasma laidlawii (strain PG-8A)).